Here is a 238-residue protein sequence, read N- to C-terminus: Thymidine kinase, cytosolic (238 aa).

The residue at position 2 (Ser-2) is an N-acetylserine. Residues Ser-2 and Ser-13 each carry the phosphoserine modification. ATP contacts are provided by residues 26–33, 58–60, and 97–100; these read GPMFSGKS, DTR, and DEGQ. Catalysis depends on Glu-98, which acts as the Proton acceptor. Phe-128 serves as a coordination point for substrate. 2 residues coordinate Zn(2+): Cys-153 and Cys-156. Substrate-binding positions include 172-176 and Tyr-181; that span reads VEVIG. Residues Cys-185 and Cys-188 each contribute to the Zn(2+) site. The short motif at 206-208 is the KEN box element; sequence KEN. Ser-235 is subject to Phosphoserine.

This sequence belongs to the thymidine kinase family. Homotetramer. Tetramerization from dimerization is induced by ATP and increases catalytic efficiency due to a high affinity for thymidine. Tetramerization is inhibited by phosphorylation at Ser-13. Interacts (via the KEN box) with FZR1. Post-translationally, phosphorylated on Ser-13 in mitosis. Phosphorylation of Ser-13 by CDK1 during mitosis reduces homotetramerization and catalytic efficiency when DNA replication is complete and intracellular TK1 is still present at a high level. In terms of processing, polyubiquitinated. Postmitosis, ubiquitination leads to proteasomal degradation. The KEN box sequence located at the C-terminal region targets for degradation by the anaphase promoting complex (APC/C) activated and rate-limited by FZR1.

It is found in the cytoplasm. It carries out the reaction thymidine + ATP = dTMP + ADP + H(+). In terms of biological role, cell-cycle-regulated enzyme of importance in nucleotide metabolism. Catalyzes the first enzymatic step in the salvage pathway converting thymidine into thymidine monophosphate. Transcriptional regulation limits expression to the S phase of the cell cycle and transient expression coincides with the oscillation in the intracellular dTTP concentration. This Bos taurus (Bovine) protein is Thymidine kinase, cytosolic (TK1).